Reading from the N-terminus, the 288-residue chain is Probable anion import ATP-binding protein HVO_1886 (288 aa).

The span at 1-18 shows a compositional bias: basic and acidic residues; it reads MTTERPDAGDSGSEKPDE. Residues 1-33 form a disordered region; the sequence is MTTERPDAGDSGSEKPDETAAPDPAANGARRSK. The region spanning 36–282 is the ABC transporter domain; that stretch reads LAARSLGHGF…PDDDRVRQFV (247 aa). 68–75 serves as a coordination point for ATP; it reads GPSGTGKT.

Belongs to the ABC transporter superfamily. In terms of assembly, the complex is composed of two ATP-binding proteins (HVO_1886), two transmembrane proteins (HVO_1887) and a solute-binding protein (HVO_1888).

Its subcellular location is the cell membrane. In terms of biological role, part of an ABC transporter complex involved in anions import. Responsible for energy coupling to the transport system. This Haloferax volcanii (strain ATCC 29605 / DSM 3757 / JCM 8879 / NBRC 14742 / NCIMB 2012 / VKM B-1768 / DS2) (Halobacterium volcanii) protein is Probable anion import ATP-binding protein HVO_1886.